A 415-amino-acid chain; its full sequence is Serine/threonine transporter SstT (415 aa).

The next 9 helical transmembrane spans lie at 21–41, 45–65, 83–103, 142–162, 193–213, 217–237, 299–319, 331–351, and 358–378; these read ILLGLAAGIILASLSTQAALA, LGTLFVGALKAVAPILVLMLV, ILFLYLIGTFSAALIAVVLSV, ALLNANYIGILVWAVGLGLAF, LGIFGLVASTLAETGFGALWG, LLMVLIGGMLLVALVINPLIV, MAGAAITITVLALAAVHTLGI, VVASICACGASGVAGGSLLLI, and FGISNDIAMQVVAVGFIIGVL.

It belongs to the dicarboxylate/amino acid:cation symporter (DAACS) (TC 2.A.23) family.

It localises to the cell inner membrane. It catalyses the reaction L-serine(in) + Na(+)(in) = L-serine(out) + Na(+)(out). The enzyme catalyses L-threonine(in) + Na(+)(in) = L-threonine(out) + Na(+)(out). Involved in the import of serine and threonine into the cell, with the concomitant import of sodium (symport system). The sequence is that of Serine/threonine transporter SstT from Pectobacterium carotovorum subsp. carotovorum (strain PC1).